The sequence spans 309 residues: Ribosomal RNA small subunit methyltransferase H (309 aa).

S-adenosyl-L-methionine is bound by residues 30 to 32 (GGH), D50, F74, D96, and Q103.

The protein belongs to the methyltransferase superfamily. RsmH family.

It localises to the cytoplasm. The catalysed reaction is cytidine(1402) in 16S rRNA + S-adenosyl-L-methionine = N(4)-methylcytidine(1402) in 16S rRNA + S-adenosyl-L-homocysteine + H(+). In terms of biological role, specifically methylates the N4 position of cytidine in position 1402 (C1402) of 16S rRNA. The chain is Ribosomal RNA small subunit methyltransferase H from Wigglesworthia glossinidia brevipalpis.